The sequence spans 482 residues: Auxin transporter-like protein 2 (482 aa).

At M1 to Q58 the chain is on the cytoplasmic side. A helical transmembrane segment spans residues V59 to L76. Residues S77 to G78 are Extracellular-facing. The chain crosses the membrane as a helical span at residues L79–L99. At Y100 to K134 the chain is on the cytoplasmic side. Residues A135–A155 form a helical membrane-spanning segment. Residues C156–T171 are Extracellular-facing. A helical transmembrane segment spans residues W172–Y192. Position 193 (R193) is a topological domain, cytoplasmic. A helical membrane pass occupies residues I194–A214. At A215–M231 the chain is on the extracellular side. Residues V232–V252 traverse the membrane as a helical segment. Over E253–K265 the chain is Cytoplasmic. The helical transmembrane segment at Y266–M286 threads the bilayer. Topologically, residues Y287 to A313 are extracellular. The helical transmembrane segment at V314–F334 threads the bilayer. Residues V335 to R355 lie on the Cytoplasmic side of the membrane. Residues L356–N376 traverse the membrane as a helical segment. A topological domain (extracellular) is located at residue S377. Residues A378–L398 form a helical membrane-spanning segment. The Cytoplasmic segment spans residues T399–M423. A helical transmembrane segment spans residues F424–W444. At A445–H482 the chain is on the extracellular side.

It belongs to the amino acid/polyamine transporter 2 family. Amino acid/auxin permease (AAAP) (TC 2.A.18.1) subfamily.

It localises to the cell membrane. Functionally, carrier protein involved in proton-driven auxin influx. May mediate the formation of auxin gradient from developing leaves (site of auxin biosynthesis) to tips. The protein is Auxin transporter-like protein 2 of Oryza sativa subsp. japonica (Rice).